A 957-amino-acid polypeptide reads, in one-letter code: Glycine dehydrogenase (decarboxylating) (957 aa).

K708 carries the N6-(pyridoxal phosphate)lysine modification.

The protein belongs to the GcvP family. As to quaternary structure, the glycine cleavage system is composed of four proteins: P, T, L and H. The cofactor is pyridoxal 5'-phosphate.

The enzyme catalyses N(6)-[(R)-lipoyl]-L-lysyl-[glycine-cleavage complex H protein] + glycine + H(+) = N(6)-[(R)-S(8)-aminomethyldihydrolipoyl]-L-lysyl-[glycine-cleavage complex H protein] + CO2. The glycine cleavage system catalyzes the degradation of glycine. The P protein binds the alpha-amino group of glycine through its pyridoxal phosphate cofactor; CO(2) is released and the remaining methylamine moiety is then transferred to the lipoamide cofactor of the H protein. The protein is Glycine dehydrogenase (decarboxylating) of Klebsiella pneumoniae subsp. pneumoniae (strain ATCC 700721 / MGH 78578).